The following is a 495-amino-acid chain: Aspartyl/glutamyl-tRNA(Asn/Gln) amidotransferase subunit B (495 aa).

Belongs to the GatB/GatE family. GatB subfamily. In terms of assembly, heterotrimer of A, B and C subunits.

The catalysed reaction is L-glutamyl-tRNA(Gln) + L-glutamine + ATP + H2O = L-glutaminyl-tRNA(Gln) + L-glutamate + ADP + phosphate + H(+). It carries out the reaction L-aspartyl-tRNA(Asn) + L-glutamine + ATP + H2O = L-asparaginyl-tRNA(Asn) + L-glutamate + ADP + phosphate + 2 H(+). Functionally, allows the formation of correctly charged Asn-tRNA(Asn) or Gln-tRNA(Gln) through the transamidation of misacylated Asp-tRNA(Asn) or Glu-tRNA(Gln) in organisms which lack either or both of asparaginyl-tRNA or glutaminyl-tRNA synthetases. The reaction takes place in the presence of glutamine and ATP through an activated phospho-Asp-tRNA(Asn) or phospho-Glu-tRNA(Gln). This is Aspartyl/glutamyl-tRNA(Asn/Gln) amidotransferase subunit B from Gloeothece citriformis (strain PCC 7424) (Cyanothece sp. (strain PCC 7424)).